Consider the following 583-residue polypeptide: Sensor protein SrrB (583 aa).

The Cytoplasmic segment spans residues 1–11; it reads MMSRLNSVVIK. The helical transmembrane segment at 12–32 threads the bilayer; sequence LWLTIILIVTTVLILLSIALI. The Extracellular segment spans residues 33-174; the sequence is TFMQYYFTQE…SIEDTNNAIT (142 aa). The helical transmembrane segment at 175-195 threads the bilayer; the sequence is IITIITAVIFLTITTVFAFFL. Residues 196–583 are Cytoplasmic-facing; that stretch reads SSRITKPLRR…TFIIKLPKPE (388 aa). The HAMP domain maps to 197–249; the sequence is SRITKPLRRLRDQATRVSEGDYSYKPSVTTKDEIGQLSQAFNQMSTEIEEHVD. The Histidine kinase domain occupies 366-583; sequence NVSHELRTPI…TFIIKLPKPE (218 aa). His-369 carries the post-translational modification Phosphohistidine; by autocatalysis.

It is found in the cell membrane. The enzyme catalyses ATP + protein L-histidine = ADP + protein N-phospho-L-histidine.. Member of the two-component regulatory system SrrA/SrrB, which is involved in the global regulation of staphylococcal virulence factors in response to environmental oxygen levels as well as biofilm formation. Also plays an essential role in host-derived nitric oxide resistance by regulating hmp/flavohemoglobin, an enzyme that detoxifies nitric oxide by converting it to nitrate. Functions as a sensor protein kinase which is autophosphorylated at a histidine residue and transfers its phosphate group to SrrA. In turn, SrrA binds to the upstream promoter regions of the target genes to positively and negatively regulate their expression. This is Sensor protein SrrB (srrB) from Staphylococcus aureus (strain Mu50 / ATCC 700699).